The primary structure comprises 473 residues: Photosystem II CP43 reaction center protein (473 aa).

A propeptide spanning residues 1-14 is cleaved from the precursor; it reads MKTLYSLRRFYHVE. Residue Thr-15 is modified to N-acetylthreonine. Residue Thr-15 is modified to Phosphothreonine. Helical transmembrane passes span 69-93, 134-155, 178-200, 255-275, and 291-312; these read LFEV…PHLA, LLGP…KDRN, KALY…RKIT, KPFA…LSYS, and WFNN…ASQA. A [CaMn4O5] cluster-binding site is contributed by Glu-367. A helical membrane pass occupies residues 447–471; the sequence is RARAAAAGFEKGIDRDFEPVLFMTP.

The protein belongs to the PsbB/PsbC family. PsbC subfamily. As to quaternary structure, PSII is composed of 1 copy each of membrane proteins PsbA, PsbB, PsbC, PsbD, PsbE, PsbF, PsbH, PsbI, PsbJ, PsbK, PsbL, PsbM, PsbT, PsbX, PsbY, PsbZ, Psb30/Ycf12, at least 3 peripheral proteins of the oxygen-evolving complex and a large number of cofactors. It forms dimeric complexes. Binds multiple chlorophylls and provides some of the ligands for the Ca-4Mn-5O cluster of the oxygen-evolving complex. It may also provide a ligand for a Cl- that is required for oxygen evolution. PSII binds additional chlorophylls, carotenoids and specific lipids. serves as cofactor.

The protein localises to the plastid. The protein resides in the chloroplast thylakoid membrane. One of the components of the core complex of photosystem II (PSII). It binds chlorophyll and helps catalyze the primary light-induced photochemical processes of PSII. PSII is a light-driven water:plastoquinone oxidoreductase, using light energy to abstract electrons from H(2)O, generating O(2) and a proton gradient subsequently used for ATP formation. In Solanum tuberosum (Potato), this protein is Photosystem II CP43 reaction center protein.